The primary structure comprises 201 residues: Ciliary microtubule inner protein 2C (201 aa).

Belongs to the CIMIP2 family. As to quaternary structure, microtubule inner protein component of sperm flagellar doublet microtubules. As to expression, expressed in airway epithelial cells.

The protein resides in the cytoplasm. It is found in the cytoskeleton. Its subcellular location is the cilium axoneme. It localises to the flagellum axoneme. Its function is as follows. Microtubule inner protein (MIP) part of the dynein-decorated doublet microtubules (DMTs) in cilia axoneme, which is required for motile cilia beating. Binds to the intra-tubulin interfaces. The polypeptide is Ciliary microtubule inner protein 2C (Homo sapiens (Human)).